Consider the following 358-residue polypeptide: NADH-quinone oxidoreductase subunit H (358 aa).

A run of 8 helical transmembrane segments spans residues 20–40, 95–115, 128–148, 168–188, 206–226, 253–273, 295–315, and 334–354; these read ITVGLVVSVIVKIVIILIPLI, ALFYIGPIMSLAPSFAAWAVI, IGLLYILMITSLSVYGVIIAG, ISYEIAMSAALVCVVMVSGSM, VFSWNWLPLFPIFIVYLISAV, GFAFALFFLAEYIFMILIAAL, TPSAFWMFVKMAAVLYWYLWI, and VLIPIGFAYIVVLGVWMISPL.

The protein belongs to the complex I subunit 1 family. NDH-1 is composed of 14 different subunits. Subunits NuoA, H, J, K, L, M, N constitute the membrane sector of the complex.

The protein resides in the cell inner membrane. It carries out the reaction a quinone + NADH + 5 H(+)(in) = a quinol + NAD(+) + 4 H(+)(out). Its function is as follows. NDH-1 shuttles electrons from NADH, via FMN and iron-sulfur (Fe-S) centers, to quinones in the respiratory chain. The immediate electron acceptor for the enzyme in this species is believed to be ubiquinone. Couples the redox reaction to proton translocation (for every two electrons transferred, four hydrogen ions are translocated across the cytoplasmic membrane), and thus conserves the redox energy in a proton gradient. This subunit may bind ubiquinone. This chain is NADH-quinone oxidoreductase subunit H, found in Neisseria gonorrhoeae (strain ATCC 700825 / FA 1090).